The chain runs to 275 residues: NH(3)-dependent NAD(+) synthetase (275 aa).

46–53 (GISGGQDS) is an ATP binding site. Aspartate 52 contributes to the Mg(2+) binding site. Arginine 140 lines the deamido-NAD(+) pocket. Threonine 160 provides a ligand contact to ATP. Glutamate 165 contributes to the Mg(2+) binding site. Deamido-NAD(+) contacts are provided by lysine 173 and aspartate 180. 2 residues coordinate ATP: lysine 189 and threonine 211. 260-261 (HK) provides a ligand contact to deamido-NAD(+).

Belongs to the NAD synthetase family. Homodimer.

The catalysed reaction is deamido-NAD(+) + NH4(+) + ATP = AMP + diphosphate + NAD(+) + H(+). Its pathway is cofactor biosynthesis; NAD(+) biosynthesis; NAD(+) from deamido-NAD(+) (ammonia route): step 1/1. Functionally, catalyzes the ATP-dependent amidation of deamido-NAD to form NAD. Uses ammonia as a nitrogen source. The protein is NH(3)-dependent NAD(+) synthetase of Shigella boydii serotype 4 (strain Sb227).